Here is an 836-residue protein sequence, read N- to C-terminus: MASKRKSTTPCMVRTSQVLEQDMLEEADRAKDKGAGMPQSDVTKDSWAAEPEHSSKETEVVEVKSMGENLSKKLQGGYECKYCPYSTQNLNEFTEHVDMQHPNVILNPLYVCAECNFTTKKYDSLSDHNSKFHPGETNFKLKLIKRNNQTVLEQSIEATNHVVPITASGPGSSDNDPGVSVGKTPMTKTGKLKADAKKVPKKPDEAAPENHMEGTARLVTDTAEILARLGSVELLQDSLGHVMPSVQLPPNINLVPKVPVPLNTTKYNSALDTNATMINSFNKFPYPTQAELSWLTAASKHPEEHIRIWFATQRLKHGISWSPEEVEEARKKMFNGTIQSVPPTITVLPAQLTPTKVSQPILQTALPCQILGQPSLVLTQVTSGSTTVSCSPITLAVAGVTNHGQKRPLVTPQAAPEPKRPHIAQVPEPPPKVANTPLTPASDRKKTKLQIAHLKASFLQSQFPDDAEVYRLIEVTGLARSEIKKWFSDHRYRCQRGIVHITSESLAKDQMAITGTRHGRTYHVYPDFAPQKFKEKSQGQLKTLEDSFLKSSFPTQAEVERLRVETKLSRREIDSWFSERRKLRDSMEQAVLDSMGSGKKGSDAVAPNGALSRLDQLSGAQLAGSLPSPSSAIVQNQEQVHLLRSTFARTQWPTPQEYDQLAAKTGLVRTEIVRWFKENRCLLKTGTLSWLEQYQRHHMSDDRGRDAVSRKVAKQVAESPKNGSEAAHQYAKDPKALSEEDSEKLVPRMKVGGDPTKDCLAGKPSEATSDRSEGSRDGQGSEENEESGIVDFVEVTVGEEDAISEKWGSWSRRVAEGTVERADSDSDSTPAEAGQA.

The interval 1–61 is disordered; it reads MASKRKSTTP…EHSSKETEVV (61 aa). Residues 8-19 show a composition bias toward polar residues; the sequence is TTPCMVRTSQVL. An interaction with EFNB1 region spans residues 27-77; that stretch reads ADRAKDKGAGMPQSDVTKDSWAAEPEHSSKETEVVEVKSMGENLSKKLQGG. Basic and acidic residues predominate over residues 50–61; that stretch reads EPEHSSKETEVV. Lys-64 is covalently cross-linked (Glycyl lysine isopeptide (Lys-Gly) (interchain with G-Cter in SUMO2)). C2H2-type zinc fingers lie at residues 78-101 and 110-133; these read YECK…DMQH and YVCA…SKFH. Residues 164–214 form a disordered region; it reads PITASGPGSSDNDPGVSVGKTPMTKTGKLKADAKKVPKKPDEAAPENHMEG. Positions 192–214 are enriched in basic and acidic residues; sequence LKADAKKVPKKPDEAAPENHMEG. Residues 195–358 are required for homodimerization; sequence DAKKVPKKPD…PAQLTPTKVS (164 aa). DNA-binding regions (homeobox) lie at residues 263–324, 439–501, 530–591, and 628–690; these read NTTK…WSPE, TPAS…IVHI, PQKF…EQAV, and SPSS…TLSW. The tract at residues 263 to 446 is required for repressor activity; that stretch reads NTTKYNSALD…PLTPASDRKK (184 aa). The tract at residues 263-497 is required for interaction with NFYA; that stretch reads NTTKYNSALD…SDHRYRCQRG (235 aa). Positions 317–446 are required for nuclear localization; the sequence is HGISWSPEEV…PLTPASDRKK (130 aa). Positions 404 to 442 are disordered; it reads GQKRPLVTPQAAPEPKRPHIAQVPEPPPKVANTPLTPAS. Residue Lys-455 forms a Glycyl lysine isopeptide (Lys-Gly) (interchain with G-Cter in SUMO2) linkage. 3 stretches are compositionally biased toward basic and acidic residues: residues 699 to 709, 730 to 746, and 813 to 824; these read MSDDRGRDAVS, YAKD…EKLV, and RVAEGTVERADS. Positions 699-836 are disordered; that stretch reads MSDDRGRDAV…DSTPAEAGQA (138 aa). 2 positions are modified to phosphoserine: Ser-824 and Ser-826.

The protein belongs to the ZHX family. Homodimer (via homeobox domain 1). Heterodimer with ZHX1 (via homeobox domain 1). Heterodimer with ZHX3 (via homeobox domain 1). Heterodimerization with ZHX1 is not necessary for repressor activity. Interacts (via homeobox domain) with NFYA (via N-terminus). Interacts with EFNB1 intracellular domain peptide; the interaction enhances ZHX2 transcriptional repression activity. In terms of tissue distribution, expressed in retina where it localizes to Muller glial cells of the inner nuclear layer (at protein level). Detected in heart, brain, spleen, lung, liver, skeletal muscle, kidney and testis.

The protein resides in the nucleus. Acts as a transcriptional repressor. Represses the promoter activity of the CDC25C gene stimulated by NFYA. May play a role in retinal development where it regulates the composition of bipolar cell populations, by promoting differentiation of bipolar OFF-type cells. In the brain, may promote maintenance and suppress differentiation of neural progenitor cells in the developing cortex. This Mus musculus (Mouse) protein is Zinc fingers and homeoboxes protein 2 (Zhx2).